Reading from the N-terminus, the 67-residue chain is Small ribosomal subunit protein bS21 (67 aa).

This sequence belongs to the bacterial ribosomal protein bS21 family.

The sequence is that of Small ribosomal subunit protein bS21 from Nitratidesulfovibrio vulgaris (strain DP4) (Desulfovibrio vulgaris).